Consider the following 153-residue polypeptide: ATP synthase subunit b' (153 aa).

A helical membrane pass occupies residues 20–40 (TLPLMAVQVVLLTFILNALFF).

The protein belongs to the ATPase B chain family. As to quaternary structure, F-type ATPases have 2 components, F(1) - the catalytic core - and F(0) - the membrane proton channel. F(1) has five subunits: alpha(3), beta(3), gamma(1), delta(1), epsilon(1). F(0) has four main subunits: a(1), b(1), b'(1) and c(10-14). The alpha and beta chains form an alternating ring which encloses part of the gamma chain. F(1) is attached to F(0) by a central stalk formed by the gamma and epsilon chains, while a peripheral stalk is formed by the delta, b and b' chains.

Its subcellular location is the cellular thylakoid membrane. In terms of biological role, f(1)F(0) ATP synthase produces ATP from ADP in the presence of a proton or sodium gradient. F-type ATPases consist of two structural domains, F(1) containing the extramembraneous catalytic core and F(0) containing the membrane proton channel, linked together by a central stalk and a peripheral stalk. During catalysis, ATP synthesis in the catalytic domain of F(1) is coupled via a rotary mechanism of the central stalk subunits to proton translocation. Functionally, component of the F(0) channel, it forms part of the peripheral stalk, linking F(1) to F(0). The b'-subunit is a diverged and duplicated form of b found in plants and photosynthetic bacteria. The polypeptide is ATP synthase subunit b' (Prochlorococcus marinus (strain NATL1A)).